A 36-amino-acid polypeptide reads, in one-letter code: MITAAVGALKERGGSSRQAILKYIQANFKVQANPAA.

In terms of domain architecture, H15 spans 1 to 36 (MITAAVGALKERGGSSRQAILKYIQANFKVQANPAA).

It belongs to the histone H1/H5 family. As to expression, sperm.

It is found in the nucleus. The protein localises to the chromosome. This is Histone H1-like protein EM5 from Ensis minor (Razor shell).